A 304-amino-acid polypeptide reads, in one-letter code: Ribosomal protein L11 methyltransferase (304 aa).

Positions 152, 173, 195, and 234 each coordinate S-adenosyl-L-methionine.

The protein belongs to the methyltransferase superfamily. PrmA family.

It localises to the cytoplasm. The enzyme catalyses L-lysyl-[protein] + 3 S-adenosyl-L-methionine = N(6),N(6),N(6)-trimethyl-L-lysyl-[protein] + 3 S-adenosyl-L-homocysteine + 3 H(+). Its function is as follows. Methylates ribosomal protein L11. This is Ribosomal protein L11 methyltransferase from Cupriavidus metallidurans (strain ATCC 43123 / DSM 2839 / NBRC 102507 / CH34) (Ralstonia metallidurans).